Here is a 98-residue protein sequence, read N- to C-terminus: Small ribosomal subunit protein uS17 (98 aa).

This sequence belongs to the universal ribosomal protein uS17 family. As to quaternary structure, part of the 30S ribosomal subunit.

Its function is as follows. One of the primary rRNA binding proteins, it binds specifically to the 5'-end of 16S ribosomal RNA. This is Small ribosomal subunit protein uS17 from Mesomycoplasma hyopneumoniae (strain 232) (Mycoplasma hyopneumoniae).